We begin with the raw amino-acid sequence, 327 residues long: Movement protein (327 aa).

The stretch at 297-327 (SASSSNTENELARVSQNIDLLKNKLKEICGE) forms a coiled coil.

This sequence belongs to the caulimoviridae movement protein family. In terms of assembly, homotrimer, through the coiled-coil domain. Interacts with VAP. May interact (via N-terminus) with host prenylated Rab acceptor protein 1D (PRA1D).

Its subcellular location is the host cell junction. The protein resides in the host plasmodesma. Its function is as follows. Transports viral genome to neighboring plant cells directly through plasmosdesmata, without any budding. The movement protein allows efficient cell to cell propagation, by bypassing the host cell wall barrier. Acts by forming tubules structures that increase the size exclusion limit (SEL) of plasmodesmata, thereby allowing viral ribonucleocapsids to spread directly to neighboring cells. The polypeptide is Movement protein (Cauliflower mosaic virus (strain CM-1841) (CaMV)).